Reading from the N-terminus, the 347-residue chain is Merozoite surface protein P12 (347 aa).

The signal sequence occupies residues 1–25 (MIKLSKKYCLGISFVLYILLSVCEG). 6-Cys domains follow at residues 27–172 (KNLT…IPSL) and 175–305 (KVKG…ISSS). N-linked (GlcNAc...) asparagine glycosylation is present at N28. 3 disulfide bridges follow: C31-C53, C67-C138, and C81-C136. 6 N-linked (GlcNAc...) asparagine glycosylation sites follow: N147, N200, N228, N242, N265, and N322. 3 cysteine pairs are disulfide-bonded: C179–C211, C225–C286, and C236–C284. N322 carries the GPI-anchor amidated asparagine lipid modification. A propeptide spans 323 to 347 (SSFLTLSSYCAFITFIITSFLSFIL) (removed in mature form).

As to quaternary structure, heterodimer; heterodimerizes with PF41. May form an antiparallel heterodimer with PF41. Post-translationally, processed into a soluble form.

It localises to the cell surface. Its subcellular location is the cell membrane. In Plasmodium falciparum (isolate 3D7), this protein is Merozoite surface protein P12 (PF12).